Reading from the N-terminus, the 507-residue chain is Sugar transport protein 8 (507 aa).

The Cytoplasmic segment spans residues 1 to 21; that stretch reads MAVVISSNGNSKSFDAKMTVY. A run of 12 helical transmembrane segments spans residues 22–42, 79–99, 116–136, 139–159, 166–186, 200–220, 281–301, 319–339, 346–366, 382–402, 419–439, and 448–468; these read VFICVIIAAVGGLIFGYDIGI, FLQLFTSSLYLAALVASFFAS, IFFLIGVGLAAGAVNIYMLII, ILLGFGVGFGNQAVPLFLSEI, GGLNIVFQLMVTIGILIANIV, IALGGAGIPALILLFGSLLIC, FVIGMLLQFFQQFTGINAIMF, LSAVVTGTINVLSTFVGIFLV, FLLLQSSVHMLICQLVIGIIL, LVVVIFVCVYVMGFAWSWGPL, GFALAVSCNMFFTFVIAQAFL, and GIFFFFSGWIVVMGLFALFFV. Residues 469–507 lie on the Cytoplasmic side of the membrane; it reads PETKGVSIDDMRDSVWKLHWYWKRFMLEEDEHDVEKRTD.

This sequence belongs to the major facilitator superfamily. Sugar transporter (TC 2.A.1.1) family.

It is found in the membrane. In terms of biological role, mediates an active uptake of hexoses, probably by sugar/hydrogen symport. This Arabidopsis thaliana (Mouse-ear cress) protein is Sugar transport protein 8 (STP8).